The following is a 410-amino-acid chain: Shaggy-related protein kinase epsilon (410 aa).

Ala-2 bears the N-acetylalanine mark. The Protein kinase domain occupies 74–358 (YMAERIVGQG…AMEAIVHPFF (285 aa)). Residues 80-88 (VGQGSFGIV) and Lys-103 each bind ATP. Asp-199 (proton acceptor) is an active-site residue. Tyr-234 is modified (phosphotyrosine).

This sequence belongs to the protein kinase superfamily. CMGC Ser/Thr protein kinase family. GSK-3 subfamily. Binds to KIB1. Autophosphorylated mainly on threonine and serine residues.

It carries out the reaction L-seryl-[protein] + ATP = O-phospho-L-seryl-[protein] + ADP + H(+). It catalyses the reaction L-threonyl-[protein] + ATP = O-phospho-L-threonyl-[protein] + ADP + H(+). In terms of biological role, may mediate extracellular signals to regulate transcription in differentiating cells. In Arabidopsis thaliana (Mouse-ear cress), this protein is Shaggy-related protein kinase epsilon (ASK5).